The sequence spans 127 residues: Riboflavin kinase (127 aa).

10–15 (GLGEGR) contacts CDP. Positions 39 and 41 each coordinate Mg(2+). 2 residues coordinate FMN: Thr96 and Glu104. 109-112 (IQLR) contributes to the CDP binding site.

The protein belongs to the archaeal riboflavin kinase family. Requires Mg(2+) as cofactor.

The catalysed reaction is riboflavin + CTP = CDP + FMN + H(+). The protein operates within cofactor biosynthesis; FMN biosynthesis; FMN from riboflavin (CTP route): step 1/1. Functionally, catalyzes the CTP-dependent phosphorylation of riboflavin (vitamin B2) to form flavin mononucleotide (FMN). The protein is Riboflavin kinase of Methanococcus maripaludis (strain C5 / ATCC BAA-1333).